A 206-amino-acid chain; its full sequence is Ras-related protein Rab-18 (206 aa).

The GTP site is built by serine 17, glycine 20, lysine 21, serine 22, serine 23, aspartate 34, proline 35, threonine 40, glycine 66, lysine 123, aspartate 125, and alanine 152. Position 22 (serine 22) interacts with Mg(2+). 2 consecutive short sequence motifs (switch) follow at residues 31–45 (DTFD…GVDF) and 63–80 (DTAG…YYRG). A Mg(2+)-binding site is contributed by threonine 40. Residue cysteine 199 is the site of S-palmitoyl cysteine attachment. Cysteine 203 is subject to Cysteine methyl ester. A lipid anchor (S-geranylgeranyl cysteine) is attached at cysteine 203. Positions 204–206 (SML) are cleaved as a propeptide — removed in mature form.

The protein belongs to the small GTPase superfamily. Rab family. It depends on Mg(2+) as a cofactor.

The protein resides in the endoplasmic reticulum membrane. Its subcellular location is the golgi apparatus. It is found in the cis-Golgi network membrane. The protein localises to the lipid droplet. It localises to the apical cell membrane. It carries out the reaction GTP + H2O = GDP + phosphate + H(+). Its activity is regulated as follows. Regulated by guanine nucleotide exchange factors (GEFs) which promote the exchange of bound GDP for free GTP. Regulated by GTPase activating proteins (GAPs) which increase the GTP hydrolysis activity at the ER membrane. Inhibited by GDP dissociation inhibitors (GDIs) which prevent Rab-GDP dissociation. Its function is as follows. The small GTPases Rab are key regulators of intracellular membrane trafficking, from the formation of transport vesicles to their fusion with membranes. Rabs cycle between an inactive GDP-bound form and an active GTP-bound form that is able to recruit to membranes different sets of downstream effectors directly responsible for vesicle formation, movement, tethering and fusion. RAB18 is required for the localization of ZFYVE1 to lipid droplets and for its function in mediating the formation of endoplasmic reticulum-lipid droplets (ER-LD) contacts. Also required for maintaining endoplasmic reticulum structure. Plays a role in apical endocytosis/recycling. Plays a key role in eye and brain development and neurodegeneration. This chain is Ras-related protein Rab-18 (RAB18), found in Gallus gallus (Chicken).